The chain runs to 748 residues: Polyribonucleotide nucleotidyltransferase (748 aa).

Positions 484 and 490 each coordinate Mg(2+). A KH domain is found at 551–610 (PRIETMSVPKDKIRDVIGTGGKVIREIVATTGAKVDIEDDGTVRLSSSDPANIEAAREWI). The 69-residue stretch at 620–688 (GKIYNGKVVN…NRGKVRLSMR (69 aa)) folds into the S1 motif domain. The disordered stretch occupies residues 693 to 748 (ETGAELDDNRPPRENAERRGGERPRRDRGPRRESGDRPARRDMEPEFAPAFLRKDS). The segment covering 699–736 (DDNRPPRENAERRGGERPRRDRGPRRESGDRPARRDME) has biased composition (basic and acidic residues).

It belongs to the polyribonucleotide nucleotidyltransferase family. Mg(2+) serves as cofactor.

The protein localises to the cytoplasm. It carries out the reaction RNA(n+1) + phosphate = RNA(n) + a ribonucleoside 5'-diphosphate. Its function is as follows. Involved in mRNA degradation. Catalyzes the phosphorolysis of single-stranded polyribonucleotides processively in the 3'- to 5'-direction. This Zymomonas mobilis subsp. mobilis (strain ATCC 31821 / ZM4 / CP4) protein is Polyribonucleotide nucleotidyltransferase.